We begin with the raw amino-acid sequence, 671 residues long: Phenol 2-monooxygenase (671 aa).

FAD-binding positions include 10–43 and 295–305; these read DVLI…RIFD and LQEGRVFLAGD.

It belongs to the PheA/TfdB FAD monooxygenase family. It depends on FAD as a cofactor.

The protein localises to the cytoplasm. It catalyses the reaction phenol + NADPH + O2 + H(+) = catechol + NADP(+) + H2O. It participates in aromatic compound metabolism; phenol degradation. In terms of biological role, hydroxylates phenol to catechol. Also acts on cresols. In Ralstonia pickettii (Burkholderia pickettii), this protein is Phenol 2-monooxygenase (tbuD).